A 558-amino-acid chain; its full sequence is MDLVSASQSYFKRIFQEVSDLKILLLEEDTTKIVSSCITQSNLLEQQIYLTVLLGNKREKLRHLKCVAFLRPTPTTLRLLCEELRDPKYAEYHLYFTNVIPKSFLERLAESDDFEAVKSIQEFFLDYLVVNNDLASFNIPHIIEDSPDNWQDGAFHRTHQGIISLLLSLKKKPVIRYDNNSLLCLKLAEEVSYTIQHESQLFNFRKPDTAPILLLLDRKNDPITPLLTQWTYQAMVHELFGIDNGRVSFSNSTSDNEKSTEIVLNPTLDPFYKETRFDNFGDLGVKIKDYVSHLQTKSTKKASEIESIADMKQFLEAYPEYRRLSGNVSKHVSLVSEISQVVQRENLLEVGEVEQSLVCNEPQSTDFNDIQRLLFSNISENTKLRLAALYSLRFERIDPAKVSALQQMLIAGGVNPLKVSVIPTLLHVAGYSFRQGDVFPPSNLFSRARSGLKGLRGVENVYIQHNPFLKSILLDLIQGRLKETTHPFLNSETRAQTSNEKPQDIIVVIVGGATYEEAHFVSEFNATQPGVRIILAGTTILNSTAYIDDIMYMSTRIK.

This sequence belongs to the STXBP/unc-18/SEC1 family.

The protein localises to the cytoplasm. It is found in the nucleus. It localises to the vacuole membrane. Functionally, vacuolar protein sorting-associated protein involved in Golgi-to-vacuole protein transport. This is Vacuolar protein sorting-associated protein 45 (vps45) from Schizosaccharomyces pombe (strain 972 / ATCC 24843) (Fission yeast).